We begin with the raw amino-acid sequence, 2167 residues long: MSAAQGMAYKLRTDAAPTGAGRRARRSHSSVAAPYRAARLVQGGVSIEGGLVGGCQLTEERVAARPPRAAARDAEPVRPLSTLPESSIGLYDPSRERDSCGVGFVAELSGDYKRATVNDALEMLERMAHRGACGCEKNTGDGAGILVALPHNFFREVTKDAGFELPQPGEYAVGMVFLPIDEKRRERSKAEFQKVAESLGHVILGWRRVPTDNSDLGESALQTEPVIEQVFLTKSSSSEADFEQQLYILRRLSILSIRAALNLRRGGKRDFYMCSLSSRTIVYKGQLKPCQLKGYYYADLGHENFTSYMALVHSRFSTNTFPSWDRAQPMRVLGHNGEINTLKGNKNWMKAREGLLECEKLGLTKDQFSKILPIVDATSSDSGAFDGVLELLIRGGRSLPEAVMMMIPEAWQNDVNMEPEKKALYEFLSALMEPWDGPALISFTDGRYLGATLDRNGLRPGRFYVTHSGRVVMGSEVGVVDVPSKDVLRKGRLNPGMMLLVDFENHTVVDDEALKAQYSKAHPYGEWLKRQKIYLKDIVESVPETERVAPGISGSLTQKNEKKEHAGVNGIVTPLKAFGYTVEALEMLLLPMAKDGVEALGSMGNDTPLAVMSNREKLTFEYFKQMFAQVTNPPIDPIREKIVTSMECMIGPEGDLLETTEKQCNRLALEGPLVSIDEMEAIKKMNYRGWRSKVLDITYPKKSGRKGLEETLDRICTEARGAIKKGYTVLVLSDRGFSSDRVAVSSLLAVGAVHQHLVANLERTRVGLLVESAEPREVHHFCTLVGFGADAVCPYLAIEAIWCLQNDGKIPPNGDGKPYSKEELVKKYFYASNYGMMKVLAKMGISTLASYKGAQIFEALGLSSEVIRKCFDGTPSRIEGATFEMLARDALRLHELAFPSRAPPPGSADAKALPNPGDYHWRKNGEVHLNDPLAMAKLQEAARVNSRAAYKEYSRRIQELNKTCNLRGMLKFKDTADMISVDEVEPASEIVKRFVTGAMSYGSISLEAHTALAMAMNKLGGKSNTGEGGEQPSRMEPLANGSMNPKRSAIKQVASGRFGVSSYYLTNADELQIKMAQGAKPGEGGELPGHKVIGDIAVTRHSTAGVGLISPPPHHDIYSIEDLAQLIHDLKNSNPRARISVKLVSEAGVGVVASGVVKGHADHVLISGHDGGTGASRWTGIKNAGLPWELGLAETHQTLVANGLRGRAILQTDGQLKTGKDVAVACLLGAEEFGFSTAPLITLGCIMMRKCHTNTCPVGIATQDPVLREKFAGEPEHVINFFFMLAEELREIMSQLGFRTITEMVGRSDMLEVDPEVVKSNEKLENIDLSLILKPAAEIRPGAAQYCVEKQDHGLDMALDNKLIALSKAALEKEVRVFIETPIQNTNRAVGTMLSHEVTKRYHMKGLPAGTIHVKLTGSAGQSLGAFLCPGITLELEGDSNDYVGKGLSGGKIVVYPPRDSTFIPEDNIVIGNVALYGATIGEAYFNGMAAERFCVRNSGAQAVVEGIGDHGCEYMTGGTVVILGKTGRNFAAGMSGGIAYVYDIDGKFSVRCNHELVDLYHVEEEEDITTLKMMIEQHRLNTGSVVARDILSNFDTLLPKFVKVFPRDYKRVLDNMKAEKAAAKLAKEPKISNGVSVTTKKVQPEQSTNRPTRVSNAKKYRGFISYERESISYRDPNERVKDWKEVAIESVPGPLLNTQSARCMDCGTPFCHQESSGAGCPLGNKIPEFNELVHQNRWREALDRLLETNNFPEFTGRVCPAPCEGSCVLGIIENPVSIKSIECAIIDKGFEEGWMVPRPPLQRTGKKVAIIGSGPAGLAAADQLNKMGHFVTVFERADRIGGLMMYGVPNMKTDKIEIVQRRVNLMAEEGITFVVNANVGSDPLYSIERLRSENDAVILACGATKPRDLGIPGRELSGVHFAMEFLHANTKSLLDSNLEDGRYISAKGKKVVVIGGGDTGTDCIGTSIRHGCTSIVNLELLTKPPSKRAADNPWPQWPRIFRVDYGHQEASSKFGNDPRTYEVLTKRFIGDENGNVKALEVVRVKWEKVDGRFQFKEIEGSNETIEADLVLLAMGFLGPEATIAEKLGLEKDNRSNFKAQFGNFATSVDGIFAAGDCRRGQSLVVWAITEGRQAAAAVDKYLSRNEQDAAEDITPSGAGFVQPVAA.

The tract at residues 1–31 (MSAAQGMAYKLRTDAAPTGAGRRARRSHSSV) is disordered. Residues 1 to 36 (MSAAQGMAYKLRTDAAPTGAGRRARRSHSSVAAPYR) constitute a chloroplast transit peptide. C100 functions as the Nucleophile in the catalytic mechanism. The 405-residue stretch at 100-504 (CGVGFVAELS…PGMMLLVDFE (405 aa)) folds into the Glutamine amidotransferase type-2 domain. The segment at 1022–1042 (KSNTGEGGEQPSRMEPLANGS) is disordered. 1192 to 1249 (LAETHQTLVANGLRGRAILQTDGQLKTGKDVAVACLLGAEEFGFSTAPLITLGCIMMR) contributes to the FMN binding site. [3Fe-4S] cluster-binding residues include C1245, C1251, and C1256. 1956-1970 (GGGDTGTDCIGTSIR) contributes to the NAD(+) binding site.

The protein belongs to the glutamate synthase family. As to quaternary structure, monomer. The cofactor is [3Fe-4S] cluster. FAD is required as a cofactor. FMN serves as cofactor. In terms of tissue distribution, highly expressed in roots.

It is found in the plastid. The protein resides in the chloroplast. It carries out the reaction 2 L-glutamate + NAD(+) = L-glutamine + 2-oxoglutarate + NADH + H(+). It participates in amino-acid biosynthesis; L-glutamate biosynthesis via GLT pathway; L-glutamate from 2-oxoglutarate and L-glutamine (NAD(+) route): step 1/1. It functions in the pathway energy metabolism; nitrogen metabolism. Functionally, involved in glutamate biosynthesis and plays a major role in the primary ammonium ions assimilation in seedling roots. May be involved in the reutilization of glutamine in developing organs. Plays a role in the development of tillers. This Oryza sativa subsp. japonica (Rice) protein is Glutamate synthase 1 [NADH], chloroplastic.